A 181-amino-acid chain; its full sequence is MEKIKEIIVVEGKDDLKRIKESFDCTVIETKGFALKIETIKLLKKALKYKGIIILTDSDKSGNIIRQKIVKYLGENNKIKHAYLNTKDTEVESVNKTEIIKILKGVGTLSKDNQKDLLKLSDLLELGIIGENSKENRQKIQKHFCLGDGNSKKLLERLNYFKIKKTDLKNQLALTNSPRRT.

Positions 5 to 88 (KEIIVVEGKD…IKHAYLNTKD (84 aa)) constitute a Toprim domain. The Mg(2+) site is built by Glu-11, Asp-57, and Asp-59.

This sequence belongs to the ribonuclease M5 family. Mg(2+) is required as a cofactor.

Its subcellular location is the cytoplasm. The catalysed reaction is Endonucleolytic cleavage of RNA, removing 21 and 42 nucleotides, respectively, from the 5'- and 3'-termini of a 5S-rRNA precursor.. Required for correct processing of both the 5' and 3' ends of 5S rRNA precursor. Cleaves both sides of a double-stranded region yielding mature 5S rRNA in one step. This is Ribonuclease M5 from Borreliella burgdorferi (strain ATCC 35210 / DSM 4680 / CIP 102532 / B31) (Borrelia burgdorferi).